We begin with the raw amino-acid sequence, 54 residues long: Preprotein translocase subunit SecG (54 aa).

At 1–31 the chain is on the cytoplasmic side; the sequence is MSSGQNSGGLMSSAGLVRYFDAEDRNSIRID. A helical transmembrane segment spans residues 32–53; that stretch reads PKTIVAFGVLFGVGVLVLNALA. Position 54 (I54) is a topological domain, extracellular.

This sequence belongs to the SEC61-beta family. Component of the protein translocase complex. Heterotrimer consisting of alpha (SecY), beta (SecG) and gamma (SecE) subunits. Can form oligomers of the heterotrimer.

Its subcellular location is the cell membrane. Its function is as follows. Involved in protein export. The function of the beta subunit is unknown, but it may be involved in stabilization of the trimeric complex. In Haloquadratum walsbyi (strain DSM 16790 / HBSQ001), this protein is Preprotein translocase subunit SecG.